The sequence spans 710 residues: Cyclin-dependent kinase G-2 (710 aa).

A disordered region spans residues 1–350 (MAAGRHGGYR…ETPEPVKPPH (350 aa)). Positions 8–30 (GYRDYEARERELDAEASRRSKEQ) are enriched in basic and acidic residues. The span at 31-40 (QHHHHPSGRH) shows a compositional bias: basic residues. Basic and acidic residues predominate over residues 41 to 64 (QRGDSDPRCEADRRRDGGRSRGGR). The segment covering 124–133 (SVVAASASSP) has biased composition (low complexity). The segment covering 144 to 163 (WDRDSPKPMHSDVAKGKKAV) has biased composition (basic and acidic residues). The span at 170–182 (LPLPPPPPLPPQD) shows a compositional bias: pro residues. Basic and acidic residues-rich tracts occupy residues 183–195 (HIPERLAVEKSPM) and 209–218 (LQEHAESRVM). Positions 299–308 (DENEDLEVDK) are enriched in acidic residues. Residues 335–344 (YEVRRSETPE) show a composition bias toward basic and acidic residues. A Protein kinase domain is found at 365–656 (FERLNKINEG…ADAALQHEWF (292 aa)). Residues 371–379 (INEGTYGVV) and Lys394 contribute to the ATP site. The residue at position 375 (Thr375) is a Phosphothreonine. Position 376 is a phosphotyrosine (Tyr376). The active-site Proton acceptor is the Asp489. The residue at position 516 (Ser516) is a Phosphoserine. Thr522 carries the post-translational modification Phosphothreonine.

Belongs to the protein kinase superfamily. CMGC Ser/Thr protein kinase family. CDC2/CDKX subfamily.

It catalyses the reaction L-seryl-[protein] + ATP = O-phospho-L-seryl-[protein] + ADP + H(+). It carries out the reaction L-threonyl-[protein] + ATP = O-phospho-L-threonyl-[protein] + ADP + H(+). The enzyme catalyses [DNA-directed RNA polymerase] + ATP = phospho-[DNA-directed RNA polymerase] + ADP + H(+). The polypeptide is Cyclin-dependent kinase G-2 (CDKG-2) (Oryza sativa subsp. indica (Rice)).